We begin with the raw amino-acid sequence, 181 residues long: tRNA (cytidine(56)-2'-O)-methyltransferase (181 aa).

Residues Leu88, 115–119 (GGEKV), and 133–140 (IGNQPHSE) contribute to the S-adenosyl-L-methionine site.

Belongs to the aTrm56 family. In terms of assembly, homodimer.

Its subcellular location is the cytoplasm. It catalyses the reaction cytidine(56) in tRNA + S-adenosyl-L-methionine = 2'-O-methylcytidine(56) in tRNA + S-adenosyl-L-homocysteine + H(+). Functionally, specifically catalyzes the AdoMet-dependent 2'-O-ribose methylation of cytidine at position 56 in tRNAs. In Thermofilum pendens (strain DSM 2475 / Hrk 5), this protein is tRNA (cytidine(56)-2'-O)-methyltransferase.